The primary structure comprises 967 residues: Serine/threonine-protein kinase/endoribonuclease ire-1 (967 aa).

Residues 1 to 21 form the signal peptide; it reads MRATFHLFTFIFLLLFSSVIC. Residues 22 to 438 lie on the Lumenal side of the membrane; it reads ISTPGFRNDH…LLLLNNHPIP (417 aa). 2 N-linked (GlcNAc...) asparagine glycosylation sites follow: N100 and N188. Residues 439 to 455 form a helical membrane-spanning segment; it reads FYATLVTMFALLLTVIW. Over 456-967 the chain is Cytoplasmic; sequence QCGRQWDQQK…IKKKSNPNTD (512 aa). The segment at 474–494 is disordered; it reads EIVNNPGESRSAQTSKQSNRG. Over residues 479-494 the composition is skewed to polar residues; the sequence is PGESRSAQTSKQSNRG. The Protein kinase domain occupies 518–778; the sequence is YSPSDILGTG…ADAVLNHPFF (261 aa). Residues 524-532 and K546 contribute to the ATP site; that span reads LGTGCEGTV. The Proton acceptor role is filled by D636. S672 is modified (phosphoserine; by autocatalysis). The 129-residue stretch at 781 to 909 folds into the KEN domain; it reads SEKRLAYFSD…EAVFKRYYSD (129 aa). The disordered stretch occupies residues 948–967; sequence RTPLKLDKRNIKKKSNPNTD. The span at 957–967 shows a compositional bias: basic residues; the sequence is NIKKKSNPNTD.

Belongs to the protein kinase superfamily. Ser/Thr protein kinase family. Mg(2+) serves as cofactor. Post-translationally, autophosphorylated mainly on serine residues.

The protein resides in the endoplasmic reticulum membrane. It catalyses the reaction L-seryl-[protein] + ATP = O-phospho-L-seryl-[protein] + ADP + H(+). The catalysed reaction is L-threonyl-[protein] + ATP = O-phospho-L-threonyl-[protein] + ADP + H(+). With respect to regulation, the kinase domain is activated by trans-autophosphorylation. Kinase activity is required for activation of the endoribonuclease domain. Senses unfolded proteins in the lumen of the endoplasmic reticulum via its N-terminal domain which leads to enzyme auto-activation. The active endoribonuclease domain splices xbp-1 precursor mRNA to produce the mature form which then induces transcription of UPR target genes. Unfolded protein response (UPR) transcriptional activation by ire-1, as well as translational attenuation by pek-1 in a complementary pathway, maintains ER homeostasis. Regulates the transcriptional up-regulation of nucleoside-diphosphatase apy-1 and many other genes, upon ER stress. By activating the UPR pathway during non-lethal hypoxia pre-conditioning, confers adaptive protection to subsequent exposure to hypoxia. ire-1 and pek-1 are redundant genes that control a pathway essential for larval development and survival. Plays a role in the nuclear retention of unspliced mRNAs. The polypeptide is Serine/threonine-protein kinase/endoribonuclease ire-1 (Caenorhabditis elegans).